Reading from the N-terminus, the 156-residue chain is MKKLLSIFLMAFSLNAFAQTNLADVQLKDLNNQPVTLSQYKGKPVYVKMWASWCPICLAGLAEIDDLSAEKDRNFEVITIVSPDHKGEKDTADFIEWYKGLEYKNITVLLDEKGEIIDKARVRGYPFNLFLDSDLNLKKTVPGHLGAEQIRVFAEK.

Positions 1 to 18 are cleaved as a signal peptide; it reads MKKLLSIFLMAFSLNAFA. Residues 19–156 enclose the Thioredoxin domain; that stretch reads QTNLADVQLK…AEQIRVFAEK (138 aa). C54 and C57 are oxidised to a cystine.

It belongs to the thioredoxin family.

This is an uncharacterized protein from Haemophilus influenzae (strain ATCC 51907 / DSM 11121 / KW20 / Rd).